The primary structure comprises 243 residues: Probable transcriptional regulatory protein Ldb0677 (243 aa).

Positions 1 to 22 (MSGHSKWHNIQGRKNAQDAKRG) are disordered.

Belongs to the TACO1 family.

The protein localises to the cytoplasm. This Lactobacillus delbrueckii subsp. bulgaricus (strain ATCC 11842 / DSM 20081 / BCRC 10696 / JCM 1002 / NBRC 13953 / NCIMB 11778 / NCTC 12712 / WDCM 00102 / Lb 14) protein is Probable transcriptional regulatory protein Ldb0677.